The sequence spans 236 residues: uncharacterized protein (236 aa).

The protein to E.coli YfjP and YkfA.

This is an uncharacterized protein from Escherichia coli (strain K12).